A 631-amino-acid chain; its full sequence is RNA polymerase sigma factor RpoD (631 aa).

The tract at residues 395-465 (LIKANLRLVV…TRSISDQART (71 aa)) is sigma-70 factor domain-2. The short motif at 419–422 (DLVQ) is the Interaction with polymerase core subunit RpoC element. The tract at residues 474 to 550 (EQINRLNRET…DKAIKNPANH (77 aa)) is sigma-70 factor domain-3. Residues 563–616 (ILGTLPEREQEVVKMRFGLEDGYSLTLEEVGLHFNVTRERIRQIESKALRRLKN) are sigma-70 factor domain-4. Positions 589–608 (LEEVGLHFNVTRERIRQIES) form a DNA-binding region, H-T-H motif.

It belongs to the sigma-70 factor family. RpoD/SigA subfamily. In terms of assembly, interacts transiently with the RNA polymerase catalytic core.

Its subcellular location is the cytoplasm. In terms of biological role, sigma factors are initiation factors that promote the attachment of RNA polymerase to specific initiation sites and are then released. This sigma factor is the primary sigma factor during exponential growth. In Borreliella burgdorferi (strain ATCC 35210 / DSM 4680 / CIP 102532 / B31) (Borrelia burgdorferi), this protein is RNA polymerase sigma factor RpoD.